The primary structure comprises 267 residues: L-aspartate dehydrogenase (267 aa).

Residues A124 and N190 each coordinate NAD(+). The active site involves H220.

This sequence belongs to the L-aspartate dehydrogenase family.

It carries out the reaction L-aspartate + NADP(+) + H2O = oxaloacetate + NH4(+) + NADPH + H(+). The enzyme catalyses L-aspartate + NAD(+) + H2O = oxaloacetate + NH4(+) + NADH + H(+). It functions in the pathway cofactor biosynthesis; NAD(+) biosynthesis; iminoaspartate from L-aspartate (dehydrogenase route): step 1/1. Its function is as follows. Specifically catalyzes the NAD or NADP-dependent dehydrogenation of L-aspartate to iminoaspartate. The sequence is that of L-aspartate dehydrogenase from Ralstonia pickettii (strain 12J).